The following is a 327-amino-acid chain: METQIHQLEQEAYTAVLRAFKAQSDAISWEKESLITELRKELRVSDDEHRELLSRVNKDDTIQRIRDWRQGGASQITRHATIQPFDVLPSPTFSAARKKQKTFPSYNPSIGATGNRSFNNRLVSSGISGNESAEALIGRKVWTKWPEDNHFYEAIITQYNADEGRHALVYDIHAANETWEWVDLKEIPPEDIRWDGEESGVALNIGHGSASFRGNRRGQIHGGRGRGPRIHQPRRELVPPPTQQNGSGGRRTSSDDIELFNTDSLVKEVERVFDSTHPDPLELDKAKKMLKEHEQALIAAIARLADTSDGEMDGDPPYSHDHPMPQG.

The ENT domain maps to 1–88 (METQIHQLEQ…HATIQPFDVL (88 aa)). Positions 32–58 (ESLITELRKELRVSDDEHRELLSRVNK) form a coiled coil. Disordered stretches follow at residues 206–257 (GHGS…SDDI) and 305–327 (ADTS…MPQG). The span at 214 to 232 (GNRRGQIHGGRGRGPRIHQ) shows a compositional bias: basic residues. A coiled-coil region spans residues 281–306 (LELDKAKKMLKEHEQALIAAIARLAD). A Phosphoserine modification is found at serine 308. A compositionally biased stretch (basic and acidic residues) spans 318–327 (YSHDHPMPQG).

As to quaternary structure, isoform 1 interacts with EDM2 in nucleus.

Its subcellular location is the nucleus. Probably involved in the regulation of chromatin states. Contributes to RPP7-mediated and basal immunity, especially against Hyaloperonospora arabidopsidis isolate Hiks1. Regulates negatively EDM2-dependent floral transition. This Arabidopsis thaliana (Mouse-ear cress) protein is Protein EMSY-LIKE 1.